The primary structure comprises 552 residues: CTP synthase (552 aa).

Positions 1-270 (MTKYVFVTGG…DRIICEELKL (270 aa)) are amidoligase domain. Ser13 lines the CTP pocket. Ser13 is a binding site for UTP. Residues 14 to 19 (SLGKGI) and Asp71 contribute to the ATP site. Residues Asp71 and Glu144 each coordinate Mg(2+). CTP contacts are provided by residues 151–153 (DIE), 191–196 (KTKPTQ), and Lys227. UTP contacts are provided by residues 191 to 196 (KTKPTQ) and Lys227. Residues 295–547 (TIGMVGKYVD…VEAAFANKQA (253 aa)) enclose the Glutamine amidotransferase type-1 domain. Gly356 serves as a coordination point for L-glutamine. Cys383 (nucleophile; for glutamine hydrolysis) is an active-site residue. Residues 384-387 (LGMQ), Glu407, and Arg473 contribute to the L-glutamine site. Catalysis depends on residues His520 and Glu522.

It belongs to the CTP synthase family. As to quaternary structure, homotetramer.

The enzyme catalyses UTP + L-glutamine + ATP + H2O = CTP + L-glutamate + ADP + phosphate + 2 H(+). The catalysed reaction is L-glutamine + H2O = L-glutamate + NH4(+). It carries out the reaction UTP + NH4(+) + ATP = CTP + ADP + phosphate + 2 H(+). Its pathway is pyrimidine metabolism; CTP biosynthesis via de novo pathway; CTP from UDP: step 2/2. With respect to regulation, allosterically activated by GTP, when glutamine is the substrate; GTP has no effect on the reaction when ammonia is the substrate. The allosteric effector GTP functions by stabilizing the protein conformation that binds the tetrahedral intermediate(s) formed during glutamine hydrolysis. Inhibited by the product CTP, via allosteric rather than competitive inhibition. Functionally, catalyzes the ATP-dependent amination of UTP to CTP with either L-glutamine or ammonia as the source of nitrogen. Regulates intracellular CTP levels through interactions with the four ribonucleotide triphosphates. The chain is CTP synthase from Burkholderia ambifaria (strain ATCC BAA-244 / DSM 16087 / CCUG 44356 / LMG 19182 / AMMD) (Burkholderia cepacia (strain AMMD)).